Reading from the N-terminus, the 2492-residue chain is Transcriptional regulator ATRX (2492 aa).

The disordered stretch occupies residues 1–147 (MTAEPMSESK…KDDFKGPEFR (147 aa)). Lysine 10 participates in a covalent cross-link: Glycyl lysine isopeptide (Lys-Gly) (interchain with G-Cter in SUMO2). Basic and acidic residues predominate over residues 17-27 (KLHDFLAHSSE). 2 positions are modified to phosphoserine: serine 25 and serine 34. The segment covering 40-57 (MNQNTDKISGSGSNSDMM) has biased composition (polar residues). Residues 58–72 (ENSKEEGTSSSEKSK) show a composition bias toward basic and acidic residues. The residue at position 89 (tyrosine 89) is a Phosphotyrosine. Serine 92 and serine 112 each carry phosphoserine. Residues 92–108 (SDDEKPLDDETVNEDAS) show a composition bias toward acidic residues. Over residues 135 to 147 (NEDKDDFKGPEFR) the composition is skewed to basic and acidic residues. Residues lysine 138 and lysine 142 each participate in a glycyl lysine isopeptide (Lys-Gly) (interchain with G-Cter in SUMO2) cross-link. Positions 159-296 (KRGEDGLHGI…LEQLLQQNKK (138 aa)) constitute an ADD domain. Residues 170–206 (SCTACGQQVNHFQKDSIYRHPSLQVLICKNCFKYYMS) form a GATA-type; atypical zinc finger. Serine 213 carries the phosphoserine modification. The PHD-type; atypical zinc-finger motif lies at 217–272 (DEQCRWCAEGGNLICCDFCHNAFCKKCILRNLGRKELSTIMDENNQWYCYICHPEP). A Glycyl lysine isopeptide (Lys-Gly) (interchain with G-Cter in SUMO2) cross-link involves residue lysine 299. Serine 316 is subject to Phosphoserine. Residue lysine 438 forms a Glycyl lysine isopeptide (Lys-Gly) (interchain with G-Cter in SUMO2) linkage. The span at 445–502 (KGEKPCALEKKDISKSEAKLSRKQVDSEHMHQNVPTEEQRTNKSTGGEHKKSDRKEEP) shows a compositional bias: basic and acidic residues. 2 disordered regions span residues 445-516 (KGEK…LDMD) and 535-576 (AMEV…GIKS). A compositionally biased stretch (polar residues) spans 550 to 567 (SGTEQEVESSSVKLNISS). A PxVxL motif motif is present at residues 581-594 (KVTKELYVKLTPVS). Residue threonine 591 is modified to Phosphothreonine. The disordered stretch occupies residues 593 to 616 (VSLSNSPIKGADCQEVPQDKDGYK). Serine 594 and serine 598 each carry phosphoserine. Lysine 623 participates in a covalent cross-link: Glycyl lysine isopeptide (Lys-Gly) (interchain with G-Cter in SUMO1); alternate. Lysine 623 is covalently cross-linked (Glycyl lysine isopeptide (Lys-Gly) (interchain with G-Cter in SUMO2); alternate). Serine 634 carries the post-translational modification Phosphoserine. The interval 649 to 956 (EESDLRRSPR…KHLKTKTCKK (308 aa)) is disordered. Threonine 674 carries the phosphothreonine modification. 4 positions are modified to phosphoserine: serine 675, serine 677, serine 729, and serine 731. Positions 755–777 (NEIHTNHKTLYDLKTQAGKDDKG) are enriched in basic and acidic residues. Residues serine 784, serine 819, serine 849, serine 850, serine 875, and serine 876 each carry the phosphoserine modification. Residues 843-864 (NTKDFDSSEDEKHSKKGMDNQG) show a composition bias toward basic and acidic residues. Residues 878-887 (DAERKQERET) show a composition bias toward basic and acidic residues. Residue serine 889 is modified to Phosphoserine. 2 stretches are compositionally biased toward basic and acidic residues: residues 894-909 (TVDK…DRLP) and 920-944 (GVDK…ETKE). Residues 945–955 (KSKHLKTKTCK) show a composition bias toward basic residues. Serine 962 bears the Phosphoserine mark. At lysine 967 the chain carries N6-acetyllysine. A compositionally biased stretch (basic and acidic residues) spans 968–1004 (FLKKDQSDETSEDDKKQSKKGTEEKKKPSDFKKKVIK). The tract at residues 968–1479 (FLKKDQSDET…SKSPGKGRKK (512 aa)) is disordered. Serine 974 bears the Phosphoserine mark. Threonine 977 carries the phosphothreonine modification. Lysine 1004 participates in a covalent cross-link: Glycyl lysine isopeptide (Lys-Gly) (interchain with G-Cter in SUMO2). A phosphoserine mark is found at serine 1011, serine 1012, and serine 1013. The segment covering 1015–1027 (GTEKLPEREEICH) has biased composition (basic and acidic residues). Residues 1045 to 1055 (KSKKIRDKTSK) are compositionally biased toward basic residues. Over residues 1056-1082 (KKDELSDYAEKSTGKGDSCDSSEDKKS) the composition is skewed to basic and acidic residues. Serine 1061 bears the Phosphoserine mark. Residue tyrosine 1063 is modified to Phosphotyrosine. A compositionally biased stretch (basic residues) spans 1090 to 1102 (EKKRCKLLGKSSR). A compositionally biased stretch (basic and acidic residues) spans 1103–1139 (KRQDCSSSDTEKYSMKEDGCNSSDKRLKRIELRERRN). Residues 1167 to 1195 (KKKQRTSSKKKAVIVKEKKRNSLRTSTKR) are compositionally biased toward basic residues. The interaction with DAXX stretch occupies residues 1189–1326 (LRTSTKRKQA…KNQVNSESDS (138 aa)). A compositionally biased stretch (polar residues) spans 1233–1246 (LVLSSHTGFCQSSG). Serine 1244, serine 1245, and serine 1253 each carry phosphoserine. The segment covering 1267 to 1281 (PENRIAKKMLLEEIK) has biased composition (basic and acidic residues). Over residues 1286–1297 (SDEDGSSDDEPE) the composition is skewed to acidic residues. Over residues 1298–1308 (EGKKRTGKQNE) the composition is skewed to basic and acidic residues. Serine 1322, serine 1324, and serine 1326 each carry phosphoserine. A compositionally biased stretch (basic residues) spans 1334–1345 (PRYRHRLLRHKL). Phosphoserine is present on residues serine 1348 and serine 1352. Basic and acidic residues-rich tracts occupy residues 1353 to 1368 (GEEK…EVKG) and 1408 to 1417 (KKAELEENQR). The span at 1419-1428 (YKQKKKRRRI) shows a compositional bias: basic residues. The segment covering 1443-1468 (EEEEEEKEEEEEEEEEEEEEEEDEND) has biased composition (acidic residues). Lysine 1488 participates in a covalent cross-link: Glycyl lysine isopeptide (Lys-Gly) (interchain with G-Cter in SUMO2). Serine 1527 is subject to Phosphoserine. Threonine 1529 bears the Phosphothreonine mark. In terms of domain architecture, Helicase ATP-binding spans 1581 to 1768 (KTKKSPGSGC…HCMVNFIKEN (188 aa)). 1594–1601 (HCMGLGKT) is an ATP binding site. Positions 1719–1722 (DEGH) match the DEGH box motif. Serine 1906 and serine 1913 each carry phosphoserine. Residues 1913–2000 (SDSDETSMSL…SSNPSSPAPD (88 aa)) are disordered. Basic residues predominate over residues 1929-1938 (KKKKKGKKGK). A Glycyl lysine isopeptide (Lys-Gly) (interchain with G-Cter in SUMO1); alternate cross-link involves residue lysine 1982. Lysine 1982 participates in a covalent cross-link: Glycyl lysine isopeptide (Lys-Gly) (interchain with G-Cter in SUMO2); alternate. Lysine 1987 participates in a covalent cross-link: Glycyl lysine isopeptide (Lys-Gly) (interchain with G-Cter in SUMO2). Low complexity predominate over residues 1990–1999 (SSSNPSSPAP). 2 positions are modified to phosphoserine: serine 1992 and serine 1996. Positions 2010 to 2280 (DAEVLEHSGK…RKAAWAEYEA (271 aa)) are interaction with MECP2. The Helicase C-terminal domain occupies 2025–2205 (EILRMAEEIG…ERHFTMNELT (181 aa)). Serine 2220 bears the Phosphoserine mark. Residues 2462–2492 (PVAGGMQPPPLQRAPPPMRSKNPGPSQGKSM) are disordered. Pro residues predominate over residues 2468-2479 (QPPPLQRAPPPM). Residues arginine 2474 and arginine 2480 each carry the omega-N-methylarginine modification.

This sequence belongs to the SNF2/RAD54 helicase family. In terms of assembly, interacts with DAXX to form the chromatin remodeling complex ATRX:DAXX. Probably binds EZH2. Binds annexin V in a calcium and phosphatidylcholine/phosphatidylserine-dependent manner. Interacts directly with CBX5 via the PxVxL motif. Interacts with RAD50, MRE11 and NBN; indicative for an association with the MRN complex. Interacts with histone MACROH2A1. Interacts with histone H3 peptides methylated at 'Lys-10' with preferences H3K9me3 &gt; H3K9me2 &gt; H3K9me1. Interacts with histone H3 peptides unmethylated at 'Lys-5' (H3K4me0). Interacts with MECP2, SMC1 and SMC3. Interacts with SETDB1, TRIM28 and ZNF274. Post-translationally, phosphorylated at serine residues during mitose. Phosphorylation may promote the release from the nuclear matrix and progression to mitosis. As to expression, ubiquitous.

It is found in the nucleus. The protein resides in the chromosome. It localises to the telomere. Its subcellular location is the PML body. It catalyses the reaction ATP + H2O = ADP + phosphate + H(+). Functionally, involved in transcriptional regulation and chromatin remodeling. Facilitates DNA replication in multiple cellular environments and is required for efficient replication of a subset of genomic loci. Binds to DNA tandem repeat sequences in both telomeres and euchromatin and in vitro binds DNA quadruplex structures. May help stabilizing G-rich regions into regular chromatin structures by remodeling G4 DNA and incorporating H3.3-containing nucleosomes. Catalytic component of the chromatin remodeling complex ATRX:DAXX which has ATP-dependent DNA translocase activity and catalyzes the replication-independent deposition of histone H3.3 in pericentric DNA repeats outside S-phase and telomeres, and the in vitro remodeling of H3.3-containing nucleosomes. Its heterochromatin targeting is proposed to involve a combinatorial readout of histone H3 modifications (specifically methylation states of H3K9 and H3K4) and association with CBX5. Involved in maintaining telomere structural integrity in embryonic stem cells which probably implies recruitment of CBX5 to telomeres. Reports on the involvement in transcriptional regulation of telomeric repeat-containing RNA (TERRA) are conflicting; according to a report, it is not sufficient to decrease chromatin condensation at telomeres nor to increase expression of telomeric RNA in fibroblasts. May be involved in telomere maintenance via recombination in ALT (alternative lengthening of telomeres) cell lines. Acts as a negative regulator of chromatin incorporation of transcriptionally repressive histone MACROH2A1, particularily at telomeres and the alpha-globin cluster in erythroleukemic cells. Participates in the allele-specific gene expression at the imprinted IGF2/H19 gene locus. On the maternal allele, required for the chromatin occupancy of SMC1 and CTCTF within the H19 imprinting control region (ICR) and involved in esatblishment of histone tails modifications in the ICR. May be involved in brain development and facial morphogenesis. Binds to zinc-finger coding genes with atypical chromatin signatures and regulates its H3K9me3 levels. Forms a complex with ZNF274, TRIM28 and SETDB1 to facilitate the deposition and maintenance of H3K9me3 at the 3' exons of zinc-finger genes. The polypeptide is Transcriptional regulator ATRX (ATRX) (Homo sapiens (Human)).